Here is a 757-residue protein sequence, read N- to C-terminus: Serine/threonine-protein phosphatase with EF-hands 2 (757 aa).

An IQ domain is found at lysine 21–asparagine 46. The tract at residues alanine 128–lysine 544 is catalytic. Residues aspartate 179, histidine 181, aspartate 208, and asparagine 240 each coordinate Mn(2+). Histidine 241 serves as the catalytic Proton donor. Histidine 292 contributes to the Mn(2+) binding site. The interval cysteine 318–proline 349 is disordered. A compositionally biased stretch (basic and acidic residues) spans arginine 321 to asparagine 335. Position 492 (histidine 492) interacts with Mn(2+). EF-hand domains are found at residues alanine 572 to leucine 607, arginine 656 to histidine 691, and isoleucine 696 to serine 731. Ca(2+) is bound by residues aspartate 585, aspartate 587, serine 589, aspartate 596, aspartate 669, aspartate 671, serine 673, glutamate 680, aspartate 709, asparagine 711, aspartate 713, histidine 715, and glutamate 720.

It belongs to the PPP phosphatase family. Mn(2+) is required as a cofactor. As to expression, detected in retina, more specifically in photoreceptors.

It catalyses the reaction O-phospho-L-seryl-[protein] + H2O = L-seryl-[protein] + phosphate. The enzyme catalyses O-phospho-L-threonyl-[protein] + H2O = L-threonyl-[protein] + phosphate. Activated by calcium. Its function is as follows. May play a role in phototransduction. May dephosphorylate photoactivated rhodopsin. May function as a calcium sensing regulator of ionic currents, energy production or synaptic transmission. The chain is Serine/threonine-protein phosphatase with EF-hands 2 (Ppef2) from Mus musculus (Mouse).